The following is a 551-amino-acid chain: uncharacterized protein (551 aa).

Residues 1–7 (MKKNSSV) are Cytoplasmic-facing. The helical transmembrane segment at 8 to 28 (VFFLVGLSQFVTMAFLIIGSI) threads the bilayer. Residues 29–88 (TAPIFKQIGYSKYDEITYGTFGYCKEGSCSKASYNYHPDELSDSDSNWKLNSNARSILGK) lie on the Vacuolar side of the membrane. The chain crosses the membrane as a helical span at residues 89–109 (IIFITPIAAGLNFLGFLCTIM). At 110–135 (SVLLINVLSSDRVGSASAIMFFVNLT) the chain is on the cytoplasmic side. The chain crosses the membrane as a helical span at residues 136 to 156 (FSTLGFLSASLICIVVFLLFY). Topologically, residues 157–160 (PHVT) are vacuolar. Residues 161–181 (WCSWVLIPGAALSLLVIPLIF) form a helical membrane-spanning segment. The Cytoplasmic segment spans residues 182-551 (SAYSRSSGSR…TSLNNPYGFR (370 aa)). Phosphoserine is present on residues Ser224 and Ser232. The interval 280–341 (AKDMENSNGS…NGSNTSNNIN (62 aa)) is disordered. Positions 307 to 320 (TSTYSVIESESGLK) are enriched in polar residues. Over residues 321-341 (NGSVSNNYVRNNGSNTSNNIN) the composition is skewed to low complexity. At Ser363 the chain carries Phosphoserine.

In terms of assembly, forms homo dimers or homooligomers in MCC microdomains. Interacts with BOI2 and RHO3, two key regulators of secretion.

Its subcellular location is the vacuole membrane. The protein resides in the cell membrane. In terms of biological role, protein involved in secretion and cell wall organization. Contributes to cell surface-related functions as a auxiliary component of MCC/eisosome that specifically interacts with the secretory pathway. This is an uncharacterized protein from Saccharomyces cerevisiae (strain ATCC 204508 / S288c) (Baker's yeast).